Reading from the N-terminus, the 133-residue chain is DNA-directed RNA polymerase subunit omega (133 aa).

This sequence belongs to the RNA polymerase subunit omega family. In terms of assembly, the RNAP catalytic core consists of 2 alpha, 1 beta, 1 beta' and 1 omega subunit. When a sigma factor is associated with the core the holoenzyme is formed, which can initiate transcription.

The catalysed reaction is RNA(n) + a ribonucleoside 5'-triphosphate = RNA(n+1) + diphosphate. Its function is as follows. Promotes RNA polymerase assembly. Latches the N- and C-terminal regions of the beta' subunit thereby facilitating its interaction with the beta and alpha subunits. The polypeptide is DNA-directed RNA polymerase subunit omega (Mesorhizobium japonicum (strain LMG 29417 / CECT 9101 / MAFF 303099) (Mesorhizobium loti (strain MAFF 303099))).